The chain runs to 190 residues: PBP1-interacting protein LSM12 (190 aa).

A Sm domain is found at 2 to 69 (PVCNNDSQLI…IKEVTALRDN (68 aa)). An AD domain is found at 84-190 (PSMQAARDRS…ERVQKTLSKK (107 aa)).

It belongs to the LSM12 family. Forms a complex composed of at least MKT1, PBP1, XAC1 and LSM12. Forms a complex composed of at least MKT1L, PBP1, XAC1 and LSM12. Within the complex, interacts with PBP1; the interaction is direct.

Functionally, involved in post-transcriptional regulation of gene expression. This is PBP1-interacting protein LSM12 from Trypanosoma brucei brucei (strain 927/4 GUTat10.1).